The sequence spans 141 residues: Hemoglobin subunit alpha (141 aa).

The 141-residue stretch at V1 to R141 folds into the Globin domain. S3 is subject to Phosphoserine. At K7 the chain carries N6-succinyllysine. At T8 the chain carries Phosphothreonine. The residue at position 11 (K11) is an N6-succinyllysine. K16 bears the N6-acetyllysine; alternate mark. K16 carries the N6-succinyllysine; alternate modification. The residue at position 35 (S35) is a Phosphoserine. At K40 the chain carries N6-succinyllysine. A Phosphoserine modification is found at S49. H58 serves as a coordination point for O2. Position 87 (H87) interacts with heme b. Residue S102 is modified to Phosphoserine. T108 bears the Phosphothreonine mark. At S124 the chain carries Phosphoserine. T134 is modified (phosphothreonine). The residue at position 138 (S138) is a Phosphoserine.

The protein belongs to the globin family. In terms of assembly, heterotetramer of two alpha chains and two beta chains. Red blood cells.

In terms of biological role, involved in oxygen transport from the lung to the various peripheral tissues. Functionally, hemopressin acts as an antagonist peptide of the cannabinoid receptor CNR1. Hemopressin-binding efficiently blocks cannabinoid receptor CNR1 and subsequent signaling. The sequence is that of Hemoglobin subunit alpha (HBA) from Dasypus novemcinctus (Nine-banded armadillo).